Consider the following 112-residue polypeptide: Secretoglobin family 2B member 24 (112 aa).

A signal peptide spans 1–23 (MKGTLLLLALLMIGELGFHTTEA).

Belongs to the secretoglobin family. As to expression, expressed in lacrimal gland, at higher level in males than females.

The protein localises to the secreted. The protein is Secretoglobin family 2B member 24 (Scgb2b24) of Mus musculus (Mouse).